The following is a 111-amino-acid chain: Large ribosomal subunit protein bL20c (111 aa).

It belongs to the bacterial ribosomal protein bL20 family.

Its subcellular location is the plastid. It is found in the chloroplast. In terms of biological role, binds directly to 23S ribosomal RNA and is necessary for the in vitro assembly process of the 50S ribosomal subunit. It is not involved in the protein synthesizing functions of that subunit. This chain is Large ribosomal subunit protein bL20c, found in Ostreococcus tauri.